Here is an 863-residue protein sequence, read N- to C-terminus: Leucine--tRNA ligase (863 aa).

A 'HIGH' region motif is present at residues Pro-42–His-52. Positions Lys-622–Ser-626 match the 'KMSKS' region motif. Lys-625 serves as a coordination point for ATP.

This sequence belongs to the class-I aminoacyl-tRNA synthetase family.

Its subcellular location is the cytoplasm. The enzyme catalyses tRNA(Leu) + L-leucine + ATP = L-leucyl-tRNA(Leu) + AMP + diphosphate. This is Leucine--tRNA ligase from Shewanella denitrificans (strain OS217 / ATCC BAA-1090 / DSM 15013).